A 207-amino-acid chain; its full sequence is ATP-dependent Clp protease proteolytic subunit (207 aa).

The Nucleophile role is filled by Ser-111. His-136 is a catalytic residue.

Belongs to the peptidase S14 family. In terms of assembly, fourteen ClpP subunits assemble into 2 heptameric rings which stack back to back to give a disk-like structure with a central cavity, resembling the structure of eukaryotic proteasomes.

Its subcellular location is the cytoplasm. It carries out the reaction Hydrolysis of proteins to small peptides in the presence of ATP and magnesium. alpha-casein is the usual test substrate. In the absence of ATP, only oligopeptides shorter than five residues are hydrolyzed (such as succinyl-Leu-Tyr-|-NHMec, and Leu-Tyr-Leu-|-Tyr-Trp, in which cleavage of the -Tyr-|-Leu- and -Tyr-|-Trp bonds also occurs).. Cleaves peptides in various proteins in a process that requires ATP hydrolysis. Has a chymotrypsin-like activity. Plays a major role in the degradation of misfolded proteins. This is ATP-dependent Clp protease proteolytic subunit from Proteus mirabilis (strain HI4320).